A 205-amino-acid polypeptide reads, in one-letter code: MATQKEKPSSNSFKWFSTKTLKLNLSFQNRRRSPKSNSSSTLNSPRSNSDDNNNIKSHQASKEELRQVFSHFDSDGDGKISAFELRHYFGSVGEYISHEAAQEAINEVDTDADGSLGFEDFVGLMTRRDLYGDGEVDGDGELKTAFEMFEVEKGSGCITPKGLQKMLVKLGESRTYGECEAMIKFYDIDGNGILDFHEFRQMMTV.

Positions serine 26–isoleucine 55 are disordered. A compositionally biased stretch (low complexity) spans lysine 35–asparagine 54. 4 EF-hand domains span residues alanine 60–tyrosine 95, isoleucine 96–tyrosine 131, aspartate 137–serine 173, and arginine 174–valine 205. Ca(2+)-binding residues include aspartate 73, aspartate 75, aspartate 77, lysine 79, glutamate 84, aspartate 109, aspartate 111, aspartate 113, serine 115, and aspartate 120. Residues aspartate 187, aspartate 189, asparagine 191, and glutamate 198 each coordinate Ca(2+).

Its function is as follows. Potential calcium sensor. This is Probable calcium-binding protein CML41 (CML41) from Arabidopsis thaliana (Mouse-ear cress).